The chain runs to 420 residues: Probable ABC transporter-binding protein DR_1438 (420 aa).

Residues 1 to 24 (MKKFAAVLGLTVAFAAASQAHAVT) form the signal peptide.

This sequence belongs to the bacterial solute-binding protein 1 family.

Its function is as follows. Probably part of a binding-protein-dependent transport system. The polypeptide is Probable ABC transporter-binding protein DR_1438 (Deinococcus radiodurans (strain ATCC 13939 / DSM 20539 / JCM 16871 / CCUG 27074 / LMG 4051 / NBRC 15346 / NCIMB 9279 / VKM B-1422 / R1)).